We begin with the raw amino-acid sequence, 429 residues long: Zinc finger protein 275 (429 aa).

A disordered region spans residues 31 to 95; that stretch reads VSDPSPNTDP…DGKRGSPQNL (65 aa). Polar residues predominate over residues 34–51; sequence PSPNTDPAKYSESTSATR. Phosphoserine is present on Ser-76. The span at 79-89 shows a compositional bias: basic and acidic residues; the sequence is FRQHGDSDGKR. C2H2-type zinc fingers lie at residues 101–123 and 129–151; these read FACK…QRVH and WECG…RKSH. The interval 149–176 is disordered; sequence KSHVAAEPQPGPSRALENAAEKREQMER. A compositionally biased stretch (basic and acidic residues) spans 167–176; the sequence is AAEKREQMER. 9 consecutive C2H2-type zinc fingers follow at residues 181–203, 209–231, 237–259, 265–287, 293–315, 321–343, 349–371, 377–399, and 405–427; these read FECE…LRVH, FDCE…QKLH, FACK…QRMH, FDCD…QRIH, YGCP…RRIH, YACG…ARIH, YACG…RRIH, YECD…RRIH, and CECS…QPTH.

Belongs to the krueppel C2H2-type zinc-finger protein family.

It is found in the nucleus. In terms of biological role, may be involved in transcriptional regulation. The protein is Zinc finger protein 275 (ZNF275) of Homo sapiens (Human).